Reading from the N-terminus, the 111-residue chain is FK506-binding protein 1 (111 aa).

The segment at 1–20 (MGVEKTIITQGSGPSPQVGQ) is disordered. The span at 7–20 (IITQGSGPSPQVGQ) shows a compositional bias: polar residues. In terms of domain architecture, PPIase FKBP-type spans 19–111 (GQKVTMEYTG…IFDVELKKIG (93 aa)).

This sequence belongs to the FKBP-type PPIase family. FKBP1 subfamily.

Its subcellular location is the cytoplasm. The enzyme catalyses [protein]-peptidylproline (omega=180) = [protein]-peptidylproline (omega=0). With respect to regulation, inhibited by both FK506 and rapamycin. Its function is as follows. PPIases accelerate the folding of proteins. It catalyzes the cis-trans isomerization of proline imidic peptide bonds in oligopeptides. This Gibberella zeae (strain ATCC MYA-4620 / CBS 123657 / FGSC 9075 / NRRL 31084 / PH-1) (Wheat head blight fungus) protein is FK506-binding protein 1 (FPR1).